A 3351-amino-acid polypeptide reads, in one-letter code: MARMKYNIALIGILASVLLTIAVNAENACNLGCPKSDNGLLKYIPGNYYDYSFDSILTIGASSDVPNDSDDTSLKVSGSAKIFAKGNCGYTLQLSSVKVTNTKESVEKKILNSIQKPVQFTLVSGILEPQICSDSSDLDYSLNIKRAVVSLLQSGIEAEHEVDVFGMCPTHTSTSKVGNANIITKARNLNSCSHREQINSGLVSGKVNEKAGITSSLLLQANYIKESRIVNHLIENVQLTETYKFIGNTKRNSDISAKVVTILKLKNPSGTKANSPGTGSTVRSLIFQRPETYTSKNINALKTILSDLVDSTGDYVKKETAKKFVEFIRLLRQSDSETLLELAAFPHPNKVLARKVYLDGLFRTSTAESARVILKQLSKFDEKEKLLAILSLNIVKSVDKETLNQAASQLLPNAPKELYIAVGNLVAKYCLKNYCQGPEIDAISKKFSDGLKHCKPNTKREEERIVYILKGLGNAKSLSGNTVAALSECASTGRSNRIRVAALHAFSKVKCEETLQSKSLELLKNRNEDSELRIEAYLSAISCPNAEVANQISEIVNSETVNQVGGFISSNLKAIRDSTDVSRDQQKYHLANIRVTKTFPVDYRRYSFNNEVSYKLESLGVGASTDYQIIYSQHGFLPRSSRINVTTEFFGTNYNVFEASVRQENVEDVLEYYLGPKGLVNKDFDEIVKLIEVGNNGVAAGGRARRSIVDDVSKISKKYKMYGVKNVQDLNLDVSLKLFGSELAFLSLGDNIPSSLDDIINYFSTSFEKAKQELSSFEKQFSSHHLFLDTDLAYPTSIGVPLELVAQGFAATKVDLAVSLDINAILEQNWQKAKYRLKFVPSVDINANVQIGFNAQVLSTGLRVVSSAHSATGSDITVAVISDGEGFNVDLELPREKLELINFNVDTELYVAEQDKQKAIALKGNKKNKNSQPSEICFNQLELVGLNICIKSSTSLSEVQAGNGNVAERGLSVSEKFHLSRPFNFAVYLTTERKFTFKGIHTQEAFSQKWKLDYSTPGSKVSHDTTVVYELGNKPKTFSRLSFDNSQCHFAVEGGINNDKNELVVYGQYEQDKEIKKSKIGFSKNGNEYKPLIEIQDNNGISNSINGYHADGKIVVKKNSNNIERYNFENFQVSNSNNAHVAVNGWSDVGTNSLTSELRISLDHQTFLIKENLKLENGLYEAGFFINDEHSPENIYGSSIHLTIADQSYALKTNGKAAAWSIGSDGSFNFQKLADSNSARAGSLVENVEIQYKNKQVGGIKIMSNFDVNKMDVDVEISREQKIGSIIVKYESNQRHAQDYSLEASAKINKHSIDVISKCDFNGNVYVVDNSLVTSWGTLLSAKGEIGQRYSAQDININIQGNVQISGKDKVTQWILKVIGTPDKTNSDFRISRDTSELIKLTSESQHPQDKISFAKLNLIVKNQLTAKGEFRVAKNGKGDFTASIDTLKTEPKHKLEIESKFHIQSPKYDIDASLTLDGKRKVHLKSENTIEKLKFSTKNIGEANDKIIAFEANGSLKGELRGNGEIQGTFIFNAPDGRVIDGSINRKISTNAKSGLSQGNIDAQLSDTPFGSNKKRSISLIGKLDRLNTKTKEFSANSNLVYTAFNGEKSEISYQIKQQPNGDAKNIDFSLKAYGNPLPQPFEIAFALGDYSAQHAVVSITSKYGEIFSVSANGNYNNNQALEYGLQANIEIPKSTLKSLEINSHGKVLKSLIGNENAAYNVEFFLDSKTSLGQYARVNTVWNGTANDGSYDFEAQTNNMESPLKFNGKYHRKQTGNIKDGDLTGKQTYVLNAQYGAQYVKMDASLGYGAEKVDIAYVIDSSFDSVKDIKVNIRTFKPLDDSTYVVTALFKQTDKSYGLDTTFYHSAHKKGVDIRLDLLKEKPIIISSIAELLGDRKGKVLFEILNLADLDIKINSEASYVSIDEFYIIVNWSSKKLKLDGYELEARAQSKNIKIQLKNENGIIFSGTATYALKKELNKTIIDGQGKVQYQGKALSGNFKLTRQHFDFGTDREVGFSYTFMGNLGSKNGLGTLKITNKEFNTKFSVCEEKRQCTNLIVQSIVSIDEQKLDAVEHTTLIIVDLRDFGYPYEFELKSQNTRQGLKYQYHLDSFIITGNNFKYQFTANVQPTSSTIKLALPKRQILFETTQKIPADGSLFGRYEQTASFFIDKLQKPDDVARFSAIVDVTGTERVAFNANGKLKFEHPTIRPLSISGQLNGDVNQQIASAEVIFDIFRLPEQKVVGNSELRNSRSQNGFNIAYITTVKSAGLQFQYQINSNAAVDIEAHEYNIGLELNNGEIDVKAISFLNKEKFEISLSESNKHIIYIVGDFSKQNHYAKLNTKVQILDKNPIEITSEVQPNSAKIILKRQDFIDGTAEVKLGKEFKVDVIGSGKQLFNGRVALDATNFLQTNYFINEDHLNGFWHIVESEINKDSEYISENIKERLKKSRQVTDKIVKLAKEAGPDFSKLQGKLLDYKNDIVQELEADQSIAPIIDGIRTLFKKIAGIVDDINKAISEILEKAQKSIVDIYDKLQALWKDSLLKAWEDFIITVQKLISTLKTEFIKICTQSFKDLLSALEKYGPALKNYGKAIGEIVKPINDAAQEVIKIVVNAAEGVTHEFKQYVASLPSFESIRNEFNDKVKVLKLFEKATELTNSLFDQINILPQTPETSEFLQKLHDYLIAKLKQEHIDNEKYIEELGQLLIKAVRSIWVSIRSTYPGSSDHVIDFQSWIGSLTHSFDSLAVLPSILSFRSSILNCLLNENWDVVFNKKLLYSWIFFNDFELRGHVVDGKHIFTFDGLNFAYPGNCKYILAQDSVDNNFTIIGQLTNGKLKSITLIDREGSYFEVADNLALKLNGNLVEYPQHLSGLHAWRRFYTIHLYSEYGVGIVCTSDLKVCHININGFYTSKTRGLLGNGNAEPYDDFLLIDGTLAENSAALGNDYGVGKCTAIEFDNNQFKSSKRQEMCSELFGIESTLAFNFITLDSRPYRKACDIALAKVAEKEKEATACTFALAYGSAVKQINKWVLLPPRCIKCAGPAGQHDFGDEFTVKLPNNKVDVVFVVDINVTPGVLSNLIAPAINDIRESLRSRGFSDVQVGVIVFEETKRYPALLTSDGGKINYKGNVADVKLAGIKSFCDNCVEQIITEKRILDIYNSLKEIVKGIAPQADEKAFQLALDYPFRAGAAKSIIGVRSDSLEYKNWWKFVRAQLTGSITKFDGALIHLIAPVKGLSLEGVLSEKLIGFNSRLVATVDGKDSKKRTKLQFDNDMGIDFVLNNGGWVFATQNFEKLKASDQKKMLNQITSSLADTLFKTEIVSDCRCLPIHGLHGQHKCVIKSSTFVANKKAKSA.

The N-terminal stretch at 1–25 (MARMKYNIALIGILASVLLTIAVNA) is a signal peptide. The Vitellogenin domain maps to 43 to 641 (YIPGNYYDYS…SQHGFLPRSS (599 aa)). Asparagine 67, asparagine 644, asparagine 1514, asparagine 1744, asparagine 1932, asparagine 1979, and asparagine 2822 each carry an N-linked (GlcNAc...) asparagine glycan. One can recognise a VWFD domain in the interval 2786-2952 (LRGHVVDGKH…DYGVGKCTAI (167 aa)).

As to quaternary structure, interacts with Nrx-1 (via cytoplasmic domain); the interaction supports apolpp/ApoLI protein stability. May be modified covalently by lipidation. In terms of processing, cleaved into 2 chains by furin protease. However, prevention of cleavage does not impair its function. In terms of tissue distribution, during stage 12, it is highly present throughout the yolk sac. By late stage 14, it localizes in the lateral fat body cells. Starting at stage 14, it localizes to the apodemes. Component of hemolymph clots (at protein level). Expressed in the amniosera. Expressed in rhabdomere of photoreceptor cells in retina (at protein level). As to expression, expressed in rhabdomere of photoreceptor cells in retina (at protein level). Expressed in simper cells as well as interphotoreceptor matrix (at protein level).

The protein localises to the secreted. It is found in the cell projection. The protein resides in the rhabdomere. Constitutes the major component of lipophorin, which mediates transport for various types of lipids in hemolymph. Acts by forming lipoprotein particles that bind lipoproteins and lipids. Also involved in the transport of hydrophobic ligands like juvenile hormones, pheromone hydrocarbons and carotenoids. Required for morphogens wingless (wg) and hedgehog (hh) function, probably by acting as vehicles for the movement of wg and hh, explaining how covalently lipidated wg and hh can spread over long distances. May also be involved in transport and/or metabolism of heme. Involved in yolk granule formation. May be a component of yolk incorporated into yolk granules via yl/yolkless-mediated endocytosis and the endolysosomal pathway. In Drosophila melanogaster (Fruit fly), this protein is Apolipophorins.